The chain runs to 653 residues: Elongation factor 4 (653 aa).

The disordered stretch occupies residues 1–30 (MRTPCSQHRRDRPSAIGSQLPDADTLDTRQ). Residues 50–231 (AQIRNFCIIA…EVVRQVPPPQ (182 aa)) enclose the tr-type G domain. Residues 62-67 (DHGKST) and 178-181 (NKID) each bind GTP.

This sequence belongs to the TRAFAC class translation factor GTPase superfamily. Classic translation factor GTPase family. LepA subfamily.

The protein resides in the cell membrane. It carries out the reaction GTP + H2O = GDP + phosphate + H(+). Required for accurate and efficient protein synthesis under certain stress conditions. May act as a fidelity factor of the translation reaction, by catalyzing a one-codon backward translocation of tRNAs on improperly translocated ribosomes. Back-translocation proceeds from a post-translocation (POST) complex to a pre-translocation (PRE) complex, thus giving elongation factor G a second chance to translocate the tRNAs correctly. Binds to ribosomes in a GTP-dependent manner. The polypeptide is Elongation factor 4 (Mycobacterium bovis (strain ATCC BAA-935 / AF2122/97)).